The sequence spans 357 residues: 3-isopropylmalate dehydrogenase (357 aa).

4 residues coordinate substrate: R97, R107, R135, and D224. The Mg(2+) site is built by D224, D248, and D252. Residue 282–294 (GSAPDIAGQDKAN) coordinates NAD(+).

The protein belongs to the isocitrate and isopropylmalate dehydrogenases family. LeuB type 1 subfamily. As to quaternary structure, homodimer. Requires Mg(2+) as cofactor. It depends on Mn(2+) as a cofactor.

The protein localises to the cytoplasm. It catalyses the reaction (2R,3S)-3-isopropylmalate + NAD(+) = 4-methyl-2-oxopentanoate + CO2 + NADH. It functions in the pathway amino-acid biosynthesis; L-leucine biosynthesis; L-leucine from 3-methyl-2-oxobutanoate: step 3/4. Its function is as follows. Catalyzes the oxidation of 3-carboxy-2-hydroxy-4-methylpentanoate (3-isopropylmalate) to 3-carboxy-4-methyl-2-oxopentanoate. The product decarboxylates to 4-methyl-2 oxopentanoate. The chain is 3-isopropylmalate dehydrogenase from Synechococcus sp. (strain CC9902).